The sequence spans 157 residues: SsrA-binding protein (157 aa).

Residues 133–157 (LHDKRESEKKRDWGREKGRLLRARG) are disordered. Basic and acidic residues predominate over residues 135–151 (DKRESEKKRDWGREKGR).

It belongs to the SmpB family.

Its subcellular location is the cytoplasm. In terms of biological role, required for rescue of stalled ribosomes mediated by trans-translation. Binds to transfer-messenger RNA (tmRNA), required for stable association of tmRNA with ribosomes. tmRNA and SmpB together mimic tRNA shape, replacing the anticodon stem-loop with SmpB. tmRNA is encoded by the ssrA gene; the 2 termini fold to resemble tRNA(Ala) and it encodes a 'tag peptide', a short internal open reading frame. During trans-translation Ala-aminoacylated tmRNA acts like a tRNA, entering the A-site of stalled ribosomes, displacing the stalled mRNA. The ribosome then switches to translate the ORF on the tmRNA; the nascent peptide is terminated with the 'tag peptide' encoded by the tmRNA and targeted for degradation. The ribosome is freed to recommence translation, which seems to be the essential function of trans-translation. In Nitrobacter winogradskyi (strain ATCC 25391 / DSM 10237 / CIP 104748 / NCIMB 11846 / Nb-255), this protein is SsrA-binding protein.